We begin with the raw amino-acid sequence, 680 residues long: DNA ligase (680 aa).

NAD(+) contacts are provided by residues Asp35–Asp39, Ser86–Leu87, and Glu111. Lys113 serves as the catalytic N6-AMP-lysine intermediate. Arg134, Glu174, Lys290, and Lys314 together coordinate NAD(+). Zn(2+) is bound by residues Cys408, Cys411, Cys427, and Cys433. One can recognise a BRCT domain in the interval Val597–Glu680.

Belongs to the NAD-dependent DNA ligase family. LigA subfamily. The cofactor is Mg(2+). Mn(2+) serves as cofactor.

It catalyses the reaction NAD(+) + (deoxyribonucleotide)n-3'-hydroxyl + 5'-phospho-(deoxyribonucleotide)m = (deoxyribonucleotide)n+m + AMP + beta-nicotinamide D-nucleotide.. Its function is as follows. DNA ligase that catalyzes the formation of phosphodiester linkages between 5'-phosphoryl and 3'-hydroxyl groups in double-stranded DNA using NAD as a coenzyme and as the energy source for the reaction. It is essential for DNA replication and repair of damaged DNA. The protein is DNA ligase of Corynebacterium glutamicum (strain R).